The primary structure comprises 389 residues: S-adenosylmethionine synthase (389 aa).

ATP is bound at residue H16. D18 lines the Mg(2+) pocket. E44 is a K(+) binding site. E57 and Q101 together coordinate L-methionine. Residues 101-111 (QSVDIAQGVNE) are flexible loop. Residues 168 to 170 (DAK), 234 to 235 (RF), D243, 249 to 250 (RK), A266, and K270 each bind ATP. D243 is a binding site for L-methionine. K274 contacts L-methionine.

Belongs to the AdoMet synthase family. In terms of assembly, homotetramer; dimer of dimers. Mg(2+) is required as a cofactor. K(+) serves as cofactor.

Its subcellular location is the cytoplasm. It carries out the reaction L-methionine + ATP + H2O = S-adenosyl-L-methionine + phosphate + diphosphate. The protein operates within amino-acid biosynthesis; S-adenosyl-L-methionine biosynthesis; S-adenosyl-L-methionine from L-methionine: step 1/1. Functionally, catalyzes the formation of S-adenosylmethionine (AdoMet) from methionine and ATP. The overall synthetic reaction is composed of two sequential steps, AdoMet formation and the subsequent tripolyphosphate hydrolysis which occurs prior to release of AdoMet from the enzyme. This is S-adenosylmethionine synthase from Magnetococcus marinus (strain ATCC BAA-1437 / JCM 17883 / MC-1).